The sequence spans 2059 residues: Non-reducing polyketide synthase stmB (2059 aa).

The Starter acyltransferase (SAT) domain occupies 7–243; it reads LLFGDQTVEL…LKLAAYGAVH (237 aa). In terms of domain architecture, Ketosynthase family 3 (KS3) spans 366–796; that stretch reads SNSIAIVGMA…GGNSCLILEE (431 aa). Active-site for beta-ketoacyl synthase activity residues include Cys538, His673, and His713. Residues 895–1185 form the Malonyl-CoA:ACP transacylase (MAT) domain; sequence WVFSGQGSQY…CGSMVKATLG (291 aa). Residues 1273–1413 are N-terminal hotdog fold; it reads LHFVKKETVT…SASEWTDEWS (141 aa). A PKS/mFAS DH domain is found at 1273-1581; that stretch reads LHFVKKETVT…FQRMPRMVLH (309 aa). The Proton acceptor; for dehydratase activity role is filled by His1306. Residues 1435–1581 form a C-terminal hotdog fold region; the sequence is GDHLRRPVVY…FQRMPRMVLH (147 aa). Asp1495 serves as the catalytic Proton donor; for dehydratase activity. Residues 1619–1696 enclose the Carrier domain; sequence PPKHDLADQL…DARRALGGDE (78 aa). Ser1656 is modified (O-(pantetheine 4'-phosphoryl)serine). The interval 1693–1727 is disordered; sequence GGDETASESENDAEGDAPSDGGSPSGSWTPISPPE. Residues 1697 to 1709 show a composition bias toward acidic residues; the sequence is TASESENDAEGDA. Over residues 1710-1719 the composition is skewed to low complexity; the sequence is PSDGGSPSGS. A thioesterase (TE) domain region spans residues 1778–2059; that stretch reads AVEYKSNVVL…LGKLLQEAVA (282 aa).

It depends on pantetheine 4'-phosphate as a cofactor.

The protein operates within mycotoxin biosynthesis. Functionally, non-reducing polyketide synthase; part of the gene cluster that mediates the biosynthesis of stromemycin, a depside C-glucoside with two unsaturated C9 side chains belonging to aromatic polyketide glycosides. The HR-PKS stmA and the NR-PKS stmB act as scaffold-generating enzymes responsible for the biosynthesis of the polyketide skeleton bininalkenylresorcylic acid. StmA condenses on acetyl-CoA starter unit with 4 malonyl-CoA units and the stmB uses 3 more malonyl-CoA units and catalyzes the depside bond formation. The glycoytransferase stmC then acts as the tailoring enzyme responsible for 3-C-glucosylation of bininalkenylresorcylic acid to yield stromemycin. The protein is Non-reducing polyketide synthase stmB of Aspergillus ustus.